Consider the following 38-residue polypeptide: Photosystem II reaction center protein L (38 aa).

A helical transmembrane segment spans residues 17–37 (SLYWGLLLIFVLAVLFSNYFF).

The protein belongs to the PsbL family. PSII is composed of 1 copy each of membrane proteins PsbA, PsbB, PsbC, PsbD, PsbE, PsbF, PsbH, PsbI, PsbJ, PsbK, PsbL, PsbM, PsbT, PsbX, PsbY, PsbZ, Psb30/Ycf12, at least 3 peripheral proteins of the oxygen-evolving complex and a large number of cofactors. It forms dimeric complexes.

Its subcellular location is the plastid. It localises to the chloroplast thylakoid membrane. Functionally, one of the components of the core complex of photosystem II (PSII). PSII is a light-driven water:plastoquinone oxidoreductase that uses light energy to abstract electrons from H(2)O, generating O(2) and a proton gradient subsequently used for ATP formation. It consists of a core antenna complex that captures photons, and an electron transfer chain that converts photonic excitation into a charge separation. This subunit is found at the monomer-monomer interface and is required for correct PSII assembly and/or dimerization. The protein is Photosystem II reaction center protein L of Angiopteris evecta (Mule's foot fern).